A 660-amino-acid chain; its full sequence is GRIP and coiled-coil domain-containing protein 2 (660 aa).

The disordered stretch occupies residues 1-28; the sequence is MSAPESSISPVPPPGSSSGGGKKLDSLP. Coiled-coil stretches lie at residues 30 to 92, 115 to 464, and 517 to 596; these read EDLV…VENN, EWKE…KAIA, and DEYR…EYLK. In terms of domain architecture, GRIP spans 585–636; the sequence is ELSNEKNMEYLKNVFVQFLKPESVPAERDQLVIVLQRVLHLSPKEVEILKAA.

This is GRIP and coiled-coil domain-containing protein 2 from Caenorhabditis elegans.